The chain runs to 363 residues: Outer membrane protein P2 (363 aa).

Positions M1 to A20 are cleaved as a signal peptide.

The protein belongs to the Gram-negative porin family. In terms of assembly, homotrimer.

The protein localises to the cell outer membrane. Functionally, forms pores that allow passive diffusion of small molecules across the outer membrane. The chain is Outer membrane protein P2 (ompP2) from Haemophilus influenzae.